A 374-amino-acid chain; its full sequence is Beta-1,3-N-acetylglucosaminyltransferase lunatic fringe (374 aa).

Residues 1–8 (MLKTYRGK) lie on the Cytoplasmic side of the membrane. A helical; Signal-anchor for type II membrane protein transmembrane segment spans residues 9 to 29 (VVVSLAGATVTCLGFLLFLSQ). Topologically, residues 30–374 (HQRIQADGMQ…TPWCPPQVAY (345 aa)) are lumenal. The N-linked (GlcNAc...) asparagine glycan is linked to Asn40. The segment at 80-100 (RSRREADKPSEAPGAATDAPP) is disordered. Arg123 contributes to the substrate binding site. Asn162 carries N-linked (GlcNAc...) asparagine glycosylation. Intrachain disulfides connect Cys163–Cys174 and Cys192–Cys255. Asp196 provides a ligand contact to substrate. Residue Asp197 participates in Mn(2+) binding. The active site involves Asp285. Mn(2+) is bound at residue His309. Cys359 and Cys368 are joined by a disulfide.

This sequence belongs to the glycosyltransferase 31 family. Mn(2+) serves as cofactor. Requires Co(2+) as cofactor. In terms of processing, a soluble form may be derived from the membrane form by proteolytic processing. In the embryo, expressed along the A-P axis of the neural tube, within the lateral plate mesoderm, in the presomitic mesoderm and the somites, in specific rhombomeres of the hindbrain (even-numbered rhombomeres) and in the otic vesicles.

Its subcellular location is the golgi apparatus membrane. The catalysed reaction is 3-O-(alpha-L-fucosyl)-L-threonyl-[EGF-like domain protein] + UDP-N-acetyl-alpha-D-glucosamine = 3-O-(N-acetyl-beta-D-glucosaminyl-(1-&gt;3)-alpha-L-fucosyl)-L-threonyl-[EGF-like domain protein] + UDP + H(+). It catalyses the reaction 3-O-(alpha-L-fucosyl)-L-seryl-[EGF-like domain protein] + UDP-N-acetyl-alpha-D-glucosamine = 3-O-(N-acetyl-beta-D-glucosaminyl-(1-&gt;3)-alpha-L-fucosyl)-L-seryl-[EGF-like domain protein] + UDP + H(+). Functionally, glycosyltransferase that initiates the elongation of O-linked fucose residues attached to EGF-like repeats in the extracellular domain of Notch molecules. Involved in the correct formation of boundaries in the somites and hindbrain. Required for Delta-Notch-mediated induction of hypochord cells at the lateral borders of the midline precursor domain. The protein is Beta-1,3-N-acetylglucosaminyltransferase lunatic fringe (lfng) of Danio rerio (Zebrafish).